The primary structure comprises 72 residues: DNA-directed RNA polymerase subunit omega (72 aa).

Belongs to the RNA polymerase subunit omega family. In terms of assembly, the RNAP catalytic core consists of 2 alpha, 1 beta, 1 beta' and 1 omega subunit. When a sigma factor is associated with the core the holoenzyme is formed, which can initiate transcription.

It carries out the reaction RNA(n) + a ribonucleoside 5'-triphosphate = RNA(n+1) + diphosphate. Its function is as follows. Promotes RNA polymerase assembly. Latches the N- and C-terminal regions of the beta' subunit thereby facilitating its interaction with the beta and alpha subunits. The polypeptide is DNA-directed RNA polymerase subunit omega (Francisella tularensis subsp. holarctica (strain LVS)).